We begin with the raw amino-acid sequence, 659 residues long: Fructose-1,6-bisphosphatase class 3 (659 aa).

This sequence belongs to the FBPase class 3 family. It depends on Mn(2+) as a cofactor.

It catalyses the reaction beta-D-fructose 1,6-bisphosphate + H2O = beta-D-fructose 6-phosphate + phosphate. Its pathway is carbohydrate biosynthesis; gluconeogenesis. This Clostridium botulinum (strain Alaska E43 / Type E3) protein is Fructose-1,6-bisphosphatase class 3.